The following is a 255-amino-acid chain: Small ribosomal subunit protein uS10m (255 aa).

A mitochondrion-targeting transit peptide spans 1–32 (MALPAARSALSARAFIRPAAALNAAASSSRYL). Disordered regions lie at residues 30 to 52 (RYLS…NSET) and 220 to 255 (SEGE…AKSS). Over residues 236 to 255 (DAAREEKPAEKLKEEEAKSS) the composition is skewed to basic and acidic residues.

It belongs to the universal ribosomal protein uS10 family. Part of the mitochondrial small ribosomal subunit.

It is found in the mitochondrion. Involved in mitochondrial genome encoded proteins translation. Involved in the binding of tRNA to the ribosomes. This chain is Small ribosomal subunit protein uS10m (RSM10), found in Cryptococcus neoformans var. neoformans serotype D (strain B-3501A) (Filobasidiella neoformans).